The primary structure comprises 238 residues: Riboflavin-binding protein (238 aa).

Positions 1–17 (MLRFAVTLFAVITSSTC) are cleaved as a signal peptide. Cystine bridges form between Cys-22–Cys-49, Cys-41–Cys-90, Cys-50–Cys-94, Cys-74–Cys-155, Cys-81–Cys-127, Cys-116–Cys-186, Cys-120–Cys-169, Cys-133–Cys-151, and Cys-184–Cys-219. 3 N-linked (GlcNAc...) asparagine glycosylation sites follow: Asn-53, Asn-67, and Asn-105. Asn-164 is a glycosylation site (N-linked (GlcNAc...) asparagine). Residues Ser-204, Ser-205, Ser-208, Ser-209, Ser-210, Ser-212, Ser-213, and Ser-214 each carry the phosphoserine modification.

The protein belongs to the folate receptor family. N-glycosylated. Expressed in egg yolk and egg white (at protein level).

In terms of biological role, required for the transport of riboflavin to the developing oocyte. This is Riboflavin-binding protein from Dromaius novaehollandiae (Emu).